Reading from the N-terminus, the 391-residue chain is Transaldolase (391 aa).

Residues 1–329 form a transaldolase region; it reads MGKNLLEQLR…RLKVLDGQEH (329 aa). The active-site Schiff-base intermediate with substrate is Lys136. EF-hand domains are found at residues 329 to 364 and 365 to 387; these read HIKH…FDAL and DRDH…AFRL. Asp342, Asp344, Asp346, Glu353, Asp365, Asp367, Asp369, Lys371, and Glu376 together coordinate Ca(2+).

It belongs to the transaldolase family. Type 1 subfamily.

Its subcellular location is the cytoplasm. It catalyses the reaction D-sedoheptulose 7-phosphate + D-glyceraldehyde 3-phosphate = D-erythrose 4-phosphate + beta-D-fructose 6-phosphate. Its pathway is carbohydrate degradation; pentose phosphate pathway; D-glyceraldehyde 3-phosphate and beta-D-fructose 6-phosphate from D-ribose 5-phosphate and D-xylulose 5-phosphate (non-oxidative stage): step 2/3. Its function is as follows. Transaldolase is important for the balance of metabolites in the pentose-phosphate pathway. This Synechocystis sp. (strain ATCC 27184 / PCC 6803 / Kazusa) protein is Transaldolase.